Consider the following 124-residue polypeptide: Small ribosomal subunit protein bS6 (124 aa).

The tract at residues 96–124 (ETAPSPMMKEVQREEARKAAQTTTEGQPA) is disordered. Residues 115–124 (AQTTTEGQPA) show a composition bias toward polar residues.

Belongs to the bacterial ribosomal protein bS6 family.

Functionally, binds together with bS18 to 16S ribosomal RNA. The chain is Small ribosomal subunit protein bS6 from Cupriavidus metallidurans (strain ATCC 43123 / DSM 2839 / NBRC 102507 / CH34) (Ralstonia metallidurans).